We begin with the raw amino-acid sequence, 418 residues long: Light-independent protochlorophyllide reductase subunit N (418 aa).

3 residues coordinate [4Fe-4S] cluster: cysteine 17, cysteine 42, and cysteine 103.

It belongs to the BchN/ChlN family. Protochlorophyllide reductase is composed of three subunits; ChlL, ChlN and ChlB. Forms a heterotetramer of two ChlB and two ChlN subunits. Requires [4Fe-4S] cluster as cofactor.

The enzyme catalyses chlorophyllide a + oxidized 2[4Fe-4S]-[ferredoxin] + 2 ADP + 2 phosphate = protochlorophyllide a + reduced 2[4Fe-4S]-[ferredoxin] + 2 ATP + 2 H2O. The protein operates within porphyrin-containing compound metabolism; chlorophyll biosynthesis (light-independent). Its function is as follows. Component of the dark-operative protochlorophyllide reductase (DPOR) that uses Mg-ATP and reduced ferredoxin to reduce ring D of protochlorophyllide (Pchlide) to form chlorophyllide a (Chlide). This reaction is light-independent. The NB-protein (ChlN-ChlB) is the catalytic component of the complex. This chain is Light-independent protochlorophyllide reductase subunit N, found in Prochlorococcus marinus (strain MIT 9312).